The chain runs to 216 residues: MGAARLLPNLTLCLQLLILCCQTQGENHPSPNFNQYVRDQGAMTDQLSRRQIREYQLYSRTSGKHVQVTGRRISATAEDGNKFAKLIVETDTFGSRVRIKGAESEKYICMNKRGKLIGKPSGKSKDCVFTEIVLENNYTAFQNARHEGWFMAFTRQGRPRQASRSRQNQREAHFIKRLYQGQLPFPNHAERQKQFEFVGSAPTRRTKRTRRPQSQT.

The N-terminal stretch at 1 to 22 (MGAARLLPNLTLCLQLLILCCQ) is a signal peptide. Residue N137 is glycosylated (N-linked (GlcNAc...) asparagine). Residues 195-216 (FEFVGSAPTRRTKRTRRPQSQT) are disordered. Basic residues predominate over residues 204-216 (RRTKRTRRPQSQT).

This sequence belongs to the heparin-binding growth factors family. As to quaternary structure, interacts with FGFR3 and FGFR4.

It localises to the secreted. In terms of biological role, plays an important role in the regulation of embryonic development and as signaling molecule in the induction and patterning of the embryonic brain. Required for normal brain development. The chain is Fibroblast growth factor 17 (Fgf17) from Mus musculus (Mouse).